We begin with the raw amino-acid sequence, 623 residues long: Membrane protein insertase YidC (623 aa).

A helical membrane pass occupies residues Leu-8–Pro-28. Residues Thr-33–Asp-64 form a disordered region. Positions Thr-44 to Asp-62 are enriched in low complexity. 4 helical membrane passes run Met-379 to Tyr-399, Leu-449 to Ile-469, Thr-507 to Leu-527, and Ile-543 to Val-563. The span at Lys-601–Pro-617 shows a compositional bias: low complexity. The segment at Lys-601–Pro-623 is disordered.

The protein belongs to the OXA1/ALB3/YidC family. Type 1 subfamily. In terms of assembly, interacts with the Sec translocase complex via SecD. Specifically interacts with transmembrane segments of nascent integral membrane proteins during membrane integration.

It localises to the cell inner membrane. Functionally, required for the insertion and/or proper folding and/or complex formation of integral membrane proteins into the membrane. Involved in integration of membrane proteins that insert both dependently and independently of the Sec translocase complex, as well as at least some lipoproteins. Aids folding of multispanning membrane proteins. In Cereibacter sphaeroides (strain KD131 / KCTC 12085) (Rhodobacter sphaeroides), this protein is Membrane protein insertase YidC.